The following is a 326-amino-acid chain: Protein spaetzle (326 aa).

Positions 1–25 (MMTPMWISLFKVLLLLFAFFATYEA) are cleaved as a signal peptide. A glycan (N-linked (GlcNAc...) asparagine) is linked at asparagine 48. The tract at residues 56–82 (FMPIPTQHDDPTQKQKQNQNQSPIPET) is disordered. Over residues 69 to 80 (KQKQNQNQSPIP) the composition is skewed to polar residues. N-linked (GlcNAc...) asparagine glycosylation is found at asparagine 114 and asparagine 164. Residues 152–174 (YRPPQSPARPLRNDTKEHNPCAK) form a disordered region. Residues 162-174 (LRNDTKEHNPCAK) are compositionally biased toward basic and acidic residues. The 95-residue stretch at 228–322 (FLCRSIRKLV…FKIPSCCKCA (95 aa)) folds into the Spaetzle domain. Intrachain disulfides connect cysteine 230–cysteine 288, cysteine 267–cysteine 319, and cysteine 274–cysteine 321.

Homodimer; disulfide-linked. In the presence of Tl, crystal structures show one Tl molecule bound to a spaetzle C-106 homodimer. However, the active complex probably consists of two Tl molecules bound to a spaetzle C-106 homodimer. This is supported by in vitro experiments which also show binding of the spaetzle C-106 dimer to 2 Tl receptors. Ligand binding induces conformational changes in the extracellular domain of Tl. This may enable a secondary homodimerization interface at the C-terminus of the Tl extracellular domain. Post-translationally, during embryonic development proteolytically processed by activated ea/easter; ea cleaves the signal peptide and also generates the C-terminal 12 kDa active ligand for the Toll receptor, C-106 (except for isoform 8.24 and isoform 11.27 as they do not contain the cleavage site). During the immune response, cleaved in the same manner by SPE. Extracellular forms of isoform 8.19 and isoform 11.7 are glycosylated.

The protein localises to the secreted. In terms of biological role, the activated form, spaetzle C-106, acts as a ligand for the Toll receptor. Binding to Toll activates the Toll signaling pathway and induces expression of the antifungal peptide drosomycin. Component of the extracellular signaling pathway that establishes dorsal-ventral polarity in the embryo. The sequence is that of Protein spaetzle from Drosophila melanogaster (Fruit fly).